Reading from the N-terminus, the 105-residue chain is Large ribosomal subunit protein uL24 (105 aa).

It belongs to the universal ribosomal protein uL24 family. As to quaternary structure, part of the 50S ribosomal subunit.

One of two assembly initiator proteins, it binds directly to the 5'-end of the 23S rRNA, where it nucleates assembly of the 50S subunit. Its function is as follows. One of the proteins that surrounds the polypeptide exit tunnel on the outside of the subunit. The protein is Large ribosomal subunit protein uL24 of Rhizorhabdus wittichii (strain DSM 6014 / CCUG 31198 / JCM 15750 / NBRC 105917 / EY 4224 / RW1) (Sphingomonas wittichii).